We begin with the raw amino-acid sequence, 397 residues long: Phosphoglycerate kinase (397 aa).

Substrate contacts are provided by residues 25–27 (DLN), Arg-41, 64–67 (HLGR), Arg-118, and Arg-151. Residues Lys-202, Glu-324, and 350–353 (GGDT) contribute to the ATP site.

Belongs to the phosphoglycerate kinase family. As to quaternary structure, monomer.

The protein resides in the cytoplasm. The enzyme catalyses (2R)-3-phosphoglycerate + ATP = (2R)-3-phospho-glyceroyl phosphate + ADP. Its pathway is carbohydrate degradation; glycolysis; pyruvate from D-glyceraldehyde 3-phosphate: step 2/5. In Paracidovorax citrulli (strain AAC00-1) (Acidovorax citrulli), this protein is Phosphoglycerate kinase.